The primary structure comprises 56 residues: Endoregulin (56 aa).

A helical membrane pass occupies residues 25–45; the sequence is LTVIGLFTSTFLLFVLFAVVF.

Homooligomer. Can also form heterooligomers with other sarcoplasmic/endoplasmic reticulum calcium ATPase (SERCA) regulators ARLN, PLN, SLN and STRIT1/DWORF. Monomer. Interacts as a monomer with ATP2A2/SERCA2; the interaction results in inhibition of ATP2A2 Ca(2+) affinity. In terms of tissue distribution, largely expressed in non-muscle tissues with the exception of weak expression in body wall muscles at 14.5 dpc. Expressed in epithelial cells of the trachea, bronchus, lung, intestine, pancreas, and liver.

The protein localises to the endoplasmic reticulum membrane. Its function is as follows. Inhibits the activity of the calcium ATPases ATP2A2/SERCA2 and ATP2A3/SERCA3 by decreasing their apparent affinity for Ca(2+). The protein is Endoregulin (Erln) of Mus musculus (Mouse).